The chain runs to 477 residues: PEP-dependent dihydroxyacetone kinase, phosphoryl donor subunit DhaM (477 aa).

A PTS EIIA type-4 domain is found at 1–135 (MIGLIIVSHS…QALQAKQQQL (135 aa)). The active-site Tele-phosphohistidine intermediate is the His-9. An HPr domain is found at 156–243 (ALTTQWVVKN…QLAQHNFGDN (88 aa)). The active-site Pros-phosphohistidine intermediate is the His-170. Residues 269–477 (HAPNTELCIS…IETRSLIVAS (209 aa)) are PTS EI-like, N-terminal part. His-435 acts as the Tele-phosphohistidine intermediate in catalysis.

This sequence belongs to the PEP-utilizing enzyme family. Homodimer. The dihydroxyacetone kinase complex is composed of a homodimer of DhaM, a homodimer of DhaK and the subunit DhaL.

It catalyses the reaction dihydroxyacetone + phosphoenolpyruvate = dihydroxyacetone phosphate + pyruvate. In terms of biological role, component of the dihydroxyacetone kinase complex, which is responsible for the phosphoenolpyruvate (PEP)-dependent phosphorylation of dihydroxyacetone. DhaM serves as the phosphoryl donor. Is phosphorylated by phosphoenolpyruvate in an EI- and HPr-dependent reaction, and a phosphorelay system on histidine residues finally leads to phosphoryl transfer to DhaL and dihydroxyacetone. The protein is PEP-dependent dihydroxyacetone kinase, phosphoryl donor subunit DhaM of Providencia stuartii (strain MRSN 2154).